A 404-amino-acid chain; its full sequence is Argininosuccinate synthase (404 aa).

ATP-binding positions include 10–18 and Ala-37; that span reads AYSGGLDTS. Residues Tyr-88 and Ser-93 each contribute to the L-citrulline site. Residue Gly-118 participates in ATP binding. Residues Thr-120, Asn-124, and Asp-125 each coordinate L-aspartate. Residue Asn-124 coordinates L-citrulline. Residues Arg-128, Ser-178, Ser-187, Glu-263, and Tyr-275 each contribute to the L-citrulline site.

This sequence belongs to the argininosuccinate synthase family. Type 1 subfamily. Homotetramer.

It is found in the cytoplasm. The enzyme catalyses L-citrulline + L-aspartate + ATP = 2-(N(omega)-L-arginino)succinate + AMP + diphosphate + H(+). The protein operates within amino-acid biosynthesis; L-arginine biosynthesis; L-arginine from L-ornithine and carbamoyl phosphate: step 2/3. The chain is Argininosuccinate synthase from Hahella chejuensis (strain KCTC 2396).